A 532-amino-acid chain; its full sequence is Probable inorganic phosphate transporter 1-9 (532 aa).

Over 1–22 (MPELSLLSALDAARIQWYHFKA) the chain is Cytoplasmic. Residues 23-43 (IIVAGMGLFTDAYDLFCIAPI) form a helical membrane-spanning segment. Topologically, residues 44–62 (MKMISQIYYHKDSIGTALL) are extracellular. The chain crosses the membrane as a helical span at residues 63–83 (STSYAIALLGTALGQLIFGYL). The Cytoplasmic segment spans residues 84–91 (GDRVGRRK). A helical membrane pass occupies residues 92–112 (VYGLSLLIMVFSSFGCGFSVC). Topologically, residues 113 to 124 (TTRRSCVMVSLG) are extracellular. Residues 125-145 (FFRFVLGLGIGGDYPLSATIM) form a helical membrane-spanning segment. At 146–154 (SEFANKRTR) the chain is on the cytoplasmic side. A helical transmembrane segment spans residues 155–175 (GAFIAAVFSMQGLGILMSSAV). Over 176 to 207 (TMVVCLAFKNAGEGSSEKTNVAGLETLAPPES) the chain is Extracellular. Residues 208–228 (DIAWRLILMIGALPAALTFYW) traverse the membrane as a helical segment. The Cytoplasmic segment spans residues 229–292 (RMLMPETARY…KLFSRRFLSL (64 aa)). The helical transmembrane segment at 293 to 313 (HGRDLFAASANWFLVDVVFYT) threads the bilayer. The Extracellular segment spans residues 314–343 (SNLLLSQIFNFSNKPLNSTNVYDSAFEVAK). Residues 344–364 (LAAIVAACSTIPGYWFTVYFI) form a helical membrane-spanning segment. The Cytoplasmic portion of the chain corresponds to 365 to 371 (DKIGRVK). A helical transmembrane segment spans residues 372-392 (IQMMGFFLMAVVYLVAGIPYS). At 393–406 (WYWSKHEKTNKGFM) the chain is on the extracellular side. A helical transmembrane segment spans residues 407–427 (VLYGLIFFFSNFGPNTTTFII). Residues 428–441 (PAELFPARFRSTCH) lie on the Cytoplasmic side of the membrane. Residues 442 to 462 (GISGAAGKFGAIVGTVGFLWA) traverse the membrane as a helical segment. Residues 463 to 478 (TRHHEEDGFPDVKRVR) are Extracellular-facing. The helical transmembrane segment at 479–499 (IAFLILGGVCIAGMIVTYLFT) threads the bilayer. Residues 500–532 (RETMGRSLEENEDEIVSTSAGSSPANELLRRQY) are Cytoplasmic-facing. A disordered region spans residues 509 to 532 (ENEDEIVSTSAGSSPANELLRRQY). The span at 515–524 (VSTSAGSSPA) shows a compositional bias: polar residues.

It belongs to the major facilitator superfamily. Phosphate:H(+) symporter (TC 2.A.1.9) family.

The protein resides in the membrane. Functionally, high-affinity transporter for external inorganic phosphate. The chain is Probable inorganic phosphate transporter 1-9 (PHT1-9) from Arabidopsis thaliana (Mouse-ear cress).